Here is a 453-residue protein sequence, read N- to C-terminus: Pup--protein ligase (453 aa).

Mg(2+) is bound at residue E9. An ATP-binding site is contributed by R53. Mg(2+) is bound at residue Y55. The active-site Proton acceptor is D57. E63 contacts Mg(2+). ATP contacts are provided by T66 and W420.

It belongs to the Pup ligase/Pup deamidase family. Pup-conjugating enzyme subfamily.

The catalysed reaction is ATP + [prokaryotic ubiquitin-like protein]-L-glutamate + [protein]-L-lysine = ADP + phosphate + N(6)-([prokaryotic ubiquitin-like protein]-gamma-L-glutamyl)-[protein]-L-lysine.. It functions in the pathway protein degradation; proteasomal Pup-dependent pathway. It participates in protein modification; protein pupylation. Its function is as follows. Catalyzes the covalent attachment of the prokaryotic ubiquitin-like protein modifier Pup to the proteasomal substrate proteins, thereby targeting them for proteasomal degradation. This tagging system is termed pupylation. The ligation reaction involves the side-chain carboxylate of the C-terminal glutamate of Pup and the side-chain amino group of a substrate lysine. The sequence is that of Pup--protein ligase from Nocardioides sp. (strain ATCC BAA-499 / JS614).